Here is a 165-residue protein sequence, read N- to C-terminus: Phosphopantetheine adenylyltransferase (165 aa).

S9 serves as a coordination point for substrate. ATP-binding positions include 9-10 (SF) and H17. Substrate contacts are provided by K41, I75, and R89. ATP is bound by residues 90–92 (GVR), E100, and 125–131 (YLFVRSD).

This sequence belongs to the bacterial CoaD family. Homohexamer. Mg(2+) serves as cofactor.

The protein resides in the cytoplasm. The catalysed reaction is (R)-4'-phosphopantetheine + ATP + H(+) = 3'-dephospho-CoA + diphosphate. Its pathway is cofactor biosynthesis; coenzyme A biosynthesis; CoA from (R)-pantothenate: step 4/5. In terms of biological role, reversibly transfers an adenylyl group from ATP to 4'-phosphopantetheine, yielding dephospho-CoA (dPCoA) and pyrophosphate. The polypeptide is Phosphopantetheine adenylyltransferase (Borrelia turicatae (strain 91E135)).